Here is a 195-residue protein sequence, read N- to C-terminus: MRTAVFGGSFDPPHNGHLALSLFARELAGLDRLIVSVSKNPFKAAADASDDDRSAMARLLVAEINVAGVFAEISGWELQQSGPSYTIDLLRHVEERCPGDELVLLVGEDSYLQMPQWKFASEILKHCTIAVFGRSDIDAADAPPSDPLLPAIHYDFDMPVSATKIRRLAAAGQPIGQFVPSSIAQYIAEHKLYSA.

The protein belongs to the NadD family.

It carries out the reaction nicotinate beta-D-ribonucleotide + ATP + H(+) = deamido-NAD(+) + diphosphate. The protein operates within cofactor biosynthesis; NAD(+) biosynthesis; deamido-NAD(+) from nicotinate D-ribonucleotide: step 1/1. Catalyzes the reversible adenylation of nicotinate mononucleotide (NaMN) to nicotinic acid adenine dinucleotide (NaAD). In Chlorobaculum tepidum (strain ATCC 49652 / DSM 12025 / NBRC 103806 / TLS) (Chlorobium tepidum), this protein is Probable nicotinate-nucleotide adenylyltransferase.